Reading from the N-terminus, the 329-residue chain is 4-hydroxythreonine-4-phosphate dehydrogenase (329 aa).

2 residues coordinate substrate: H136 and T137. The a divalent metal cation site is built by H166, H211, and H266. Substrate-binding residues include K274, N283, and R292.

Belongs to the PdxA family. In terms of assembly, homodimer. The cofactor is Zn(2+). It depends on Mg(2+) as a cofactor. Co(2+) is required as a cofactor.

The protein resides in the cytoplasm. The enzyme catalyses 4-(phosphooxy)-L-threonine + NAD(+) = 3-amino-2-oxopropyl phosphate + CO2 + NADH. It participates in cofactor biosynthesis; pyridoxine 5'-phosphate biosynthesis; pyridoxine 5'-phosphate from D-erythrose 4-phosphate: step 4/5. Functionally, catalyzes the NAD(P)-dependent oxidation of 4-(phosphooxy)-L-threonine (HTP) into 2-amino-3-oxo-4-(phosphooxy)butyric acid which spontaneously decarboxylates to form 3-amino-2-oxopropyl phosphate (AHAP). The protein is 4-hydroxythreonine-4-phosphate dehydrogenase of Escherichia coli O17:K52:H18 (strain UMN026 / ExPEC).